The chain runs to 792 residues: RNA-binding protein RRM4 (792 aa).

The disordered stretch occupies residues 37–60 (TDSTAQASHAAEQTIDAHQQAGDV). RRM domains follow at residues 72–145 (PLLY…QDAS), 154–235 (KPRL…IDTA), and 321–398 (CNLF…LHEP). Low complexity predominate over residues 412 to 424 (AANADNSDMSSNS). Disordered stretches follow at residues 412 to 438 (AANADNSDMSSNSPPTEARKADKRQSR) and 630 to 649 (DESGEDLSPPRASSGSAPVP). Residues 640–649 (RASSGSAPVP) show a composition bias toward polar residues. In terms of domain architecture, PABC spans 715 to 792 (ATDDFIDSLQ…QHKVAAGLNK (78 aa)).

The protein belongs to the polyadenylate-binding protein type-1 family. As to quaternary structure, part of large ribonucleoprotein complexes (mRNPs) containing RNA-binding proteins RRM4 and PAB1, endosome-binding protein UPA1, core scaffold protein UPA2 and associated factor GRP1. Interacts (via PABC domain) with UPA1 (via PAM2 domain).

The protein localises to the cytoplasm. It localises to the cytoskeleton. The protein resides in the endosome. Key RNA-binding protein involved in the formation of polar-growing hyphae which is essential for infection by the plant pathogen. During filamentation, assembles into particles that shuttle bidirectionally along microtubules to both poles. The RRM4 transport particles are part of the endosomal mRNP transport that regulates polarity of the infectious hyphae by transporting distinct mRNAs encoding, for example, the ubiquitin fusion protein UBI1, the small G protein RHO3, or the septin CDC3, from the nucleus to cell poles. Recognizes a broad spectrum of cargo mRNAs and precisely binds at stop codons, which constitute landmark sites of translation, suggesting an intimate connection of mRNA transport and translation. Also binds to the specific binding motif UAUG of cargo mRNAs via its third RRM. Plus-end-directed KIN3, a kinesin-3 type motor, mediates anterograde transport of RRM4-containing mRNPs whereas split dynein DYM1-DYN2 functions in retrograde movement of mRNPs. This is RNA-binding protein RRM4 from Mycosarcoma maydis (Corn smut fungus).